A 1095-amino-acid polypeptide reads, in one-letter code: Mediator of RNA polymerase II transcription subunit 15 (1095 aa).

Positions 66 to 83 are enriched in basic and acidic residues; it reads KSKIDAMRSTRDKRKRES. 6 disordered regions span residues 66-197, 265-323, 448-508, 633-672, 737-847, and 1050-1075; these read KSKI…LTQQ, QQQQ…RNPN, SAAD…LNPT, QQQQ…KNQT, PTMA…QPGN, and SEAA…SMAG. Composition is skewed to low complexity over residues 99–113 and 133–154; these read NNNN…NNLN and NSNA…PNGN. Residues 155 to 165 show a composition bias toward polar residues; it reads DGTANPQMFMN. The segment covering 166-178 has biased composition (low complexity); that stretch reads QQAQARQQAAARQ. Residues 448-473 are compositionally biased toward polar residues; sequence SAADSTMNNSNQPMNIGNNGVNMIPN. Low complexity-rich tracts occupy residues 487–500, 633–662, and 780–793; these read QTPQ…QSNR, QQQQ…MQQA, and PTPQ…PSTT. Polar residues-rich tracts occupy residues 794–810, 817–847, and 1050–1062; these read NLSA…SATP, PKST…QPGN, and SEAA…SSLM.

Belongs to the Mediator complex subunit 15 family. In terms of assembly, component of the Mediator complex.

It is found in the nucleus. Component of the Mediator complex, a coactivator involved in regulated gene transcription of nearly all RNA polymerase II-dependent genes. Mediator functions as a bridge to convey information from gene-specific regulatory proteins to the basal RNA polymerase II transcription machinery. Mediator is recruited to promoters by direct interactions with regulatory proteins and serves as a scaffold for the assembly of a functional preinitiation complex with RNA polymerase II and the general transcription factors. This Candida glabrata (strain ATCC 2001 / BCRC 20586 / JCM 3761 / NBRC 0622 / NRRL Y-65 / CBS 138) (Yeast) protein is Mediator of RNA polymerase II transcription subunit 15 (GAL11).